We begin with the raw amino-acid sequence, 509 residues long: Lysophospholipid acyltransferase (509 aa).

At 1–14 (MAYLIDIPFEYFSS) the chain is on the lumenal side. The helical transmembrane segment at 15-35 (FLGVHPDQLKLLFCFLSAYPF) threads the bilayer. The Cytoplasmic segment spans residues 36 to 55 (AGILKRLPSAPWIRNLFSIS). Residues 56-76 (IGLFYLIGVHHLYDGVLVLLF) traverse the membrane as a helical segment. Residues 77 to 94 (DALFTYFVAAFYRSSRMP) are Lumenal-facing. Residues 95-115 (WIIFIVILGHTFSSHVIRYIY) form a helical membrane-spanning segment. The Cytoplasmic portion of the chain corresponds to 116 to 223 (PSENTDITAS…LEPALGRCWR (108 aa)). A helical transmembrane segment spans residues 224–244 (GLLWLILFITGSSIYPLKFLL). The Lumenal portion of the chain corresponds to 245 to 246 (TP). Residues 247 to 267 (KFASSPILLKYGYVCITAFVA) traverse the membrane as a helical segment. Over 268 to 410 (RMKYYGAWEL…TPGPFKRVYD (143 aa)) the chain is Cytoplasmic. The active site involves H363. A helical membrane pass occupies residues 411–431 (VIGMVATNLSLSYLIISFLLL). At 432-441 (NLKESIHVWK) the chain is on the lumenal side. The helical transmembrane segment at 442–462 (ELYFIVHIYILIALAVFNSPI) threads the bilayer. The Cytoplasmic segment spans residues 463-509 (RSKLDNKIRSRVNSYKLKSYEQSMKSTSDTDMLNMSVPKREDFENDE). The disordered stretch occupies residues 488–509 (STSDTDMLNMSVPKREDFENDE). S490 is subject to Phosphoserine. Over residues 500–509 (PKREDFENDE) the composition is skewed to basic and acidic residues.

Belongs to the membrane-bound acyltransferase family.

The protein localises to the endoplasmic reticulum membrane. The protein resides in the microsome membrane. The catalysed reaction is a 1-acyl-sn-glycero-3-phosphate + an acyl-CoA = a 1,2-diacyl-sn-glycero-3-phosphate + CoA. It carries out the reaction a 1-acyl-sn-glycero-3-phosphocholine + an acyl-CoA = a 1,2-diacyl-sn-glycero-3-phosphocholine + CoA. The enzyme catalyses a 1-acyl-sn-glycero-3-phosphoethanolamine + an acyl-CoA = a 1,2-diacyl-sn-glycero-3-phosphoethanolamine + CoA. Its function is as follows. Membrane-bound O-acyltransferase that mediates the incorporation of unsaturated acyl chains into the sn-2 position of phospholipids. This is Lysophospholipid acyltransferase (ale1) from Schizosaccharomyces pombe (strain 972 / ATCC 24843) (Fission yeast).